The following is a 779-amino-acid chain: MDAYWRAANYLSVGQIYLRDNPLLKQKLTLADVKPRLLGHWGTTPGLNFLYVHLNRLIQTHDLNMIYVTGPGHGGPGLVANTYLEGTYSELYPEVSQDEAGIKRLFTQFSYPGGIPSHVAAEVPGSINEGGELGYCLMHAYGAVFDNPDLIAACVVGDGEAETGALATSWHSNKFLNPARDGAVLPILHLNGYKIANPTVLARISHDELEALFMGYGYEPLFVEGADPRQMHQLMASALDKAHGKIAEIQRQARSRGFSDRPAWPMIIFRSPKGWTGPREVDGKKTEGTWRSHQVPLAKLAEVPAHLGILEEWLKSYRPWELFDESGSLRPELRELAPKGERRMGANPHANGGLLLKDLNLPDFRQYAVEIGIPGTVTAESTRTAGLYLRDVMKLNAQERNFRIFGPDETESNRLSPVFQETDRVFTGDILASDMQLSPDGRVMEVLSEQLCQGWLEGYLLTGRHGFFSCYEAFIHIVDSMFNQHAKWLKVCREVPWRKPIASLTYLLTSHVWRQDHNGFSHQDPGFIDHVANKKADIIRVYLPPDANTLLSVVDHCARSRDYINVIVAGKQPQLQWLDMGAAVAHCRAGLGVWEWASNDEGDPDAVVACAGDVPTMEALAAVMIVREAFPSLRLRVVNVVDLMALQAPSQHPHGIADDAFDRMFTTDKPVIFAYHGYPGLIHRLTYRRTNHANFHVHGYQEEGTTTTPFDMAVLNKLDRFHLAKAVVERVPSLASPREGFAHFVESKLAEHDAYIRENGEDLPEIRNWRWLASAVDAQ.

This sequence belongs to the XFP family. It depends on thiamine diphosphate as a cofactor.

The sequence is that of Probable phosphoketolase 2 from Rhizobium meliloti (strain 1021) (Ensifer meliloti).